The chain runs to 470 residues: Argininosuccinate lyase (470 aa).

This sequence belongs to the lyase 1 family. Argininosuccinate lyase subfamily.

It is found in the cytoplasm. The enzyme catalyses 2-(N(omega)-L-arginino)succinate = fumarate + L-arginine. The protein operates within amino-acid biosynthesis; L-arginine biosynthesis; L-arginine from L-ornithine and carbamoyl phosphate: step 3/3. The polypeptide is Argininosuccinate lyase (Mycolicibacterium vanbaalenii (strain DSM 7251 / JCM 13017 / BCRC 16820 / KCTC 9966 / NRRL B-24157 / PYR-1) (Mycobacterium vanbaalenii)).